The chain runs to 221 residues: UPF0758 protein YicR (221 aa).

Residues 99 to 221 (ALLSPEMTRE…YVSFAERGWI (123 aa)) enclose the MPN domain. Zn(2+)-binding residues include H170, H172, and D183. A JAMM motif motif is present at residues 170–183 (HNHPSGCAEPSKAD).

It belongs to the UPF0758 family. YicR subfamily.

The protein is UPF0758 protein YicR of Salmonella paratyphi A (strain ATCC 9150 / SARB42).